The primary structure comprises 472 residues: F420-non-reducing hydrogenase subunit A (472 aa).

Cys61, Cys64, Cys442, and Cys445 together coordinate Ni(2+).

Belongs to the [NiFe]/[NiFeSe] hydrogenase large subunit family. The F420-non-reducing hydrogenase is composed of three subunits; MvhA, MvhD and MvhG. It forms a complex with the heterodisulfide reductase (hdr). Ni(2+) serves as cofactor.

Part of a complex that provides reducing equivalents for heterodisulfide reductase. The protein is F420-non-reducing hydrogenase subunit A (mvhA) of Methanothermobacter marburgensis (strain ATCC BAA-927 / DSM 2133 / JCM 14651 / NBRC 100331 / OCM 82 / Marburg) (Methanobacterium thermoautotrophicum).